Here is a 145-residue protein sequence, read N- to C-terminus: MKFQVKALAAIAAFAALPALAQEGDPEAGAKAFNQCQTCHVIVDDSGTTIAGRNAKTGPNLYGVVGRTAGTQADFKGYGEGMKEAGAKGLAWDEEHFVQYVQDPTKFLKEYTGDAKAKGKMTFKLKKEADAHNIWAYLQQVAVRP.

The N-terminal stretch at 1–21 (MKFQVKALAAIAAFAALPALA) is a signal peptide. Residue glutamine 22 is modified to Pyrrolidone carboxylic acid. Positions 36, 39, 40, and 121 each coordinate heme c.

This sequence belongs to the cytochrome c family. Post-translationally, binds 1 heme c group covalently per subunit.

The protein resides in the periplasm. Its function is as follows. Cytochrome c2 is found mainly in purple, non-sulfur, photosynthetic bacteria where it functions as the electron donor to the oxidized bacteriochlorophyll in the photophosphorylation pathway. However, it may also have a role in the respiratory chain and is found in some non-photosynthetic bacteria. This Cereibacter sphaeroides (strain ATCC 17023 / DSM 158 / JCM 6121 / CCUG 31486 / LMG 2827 / NBRC 12203 / NCIMB 8253 / ATH 2.4.1.) (Rhodobacter sphaeroides) protein is Cytochrome c2 (cycA).